Here is a 515-residue protein sequence, read N- to C-terminus: 1-pyrroline-5-carboxylate dehydrogenase (515 aa).

Residues glutamate 286 and cysteine 320 contribute to the active site.

It belongs to the aldehyde dehydrogenase family. RocA subfamily.

The catalysed reaction is L-glutamate 5-semialdehyde + NAD(+) + H2O = L-glutamate + NADH + 2 H(+). It functions in the pathway amino-acid degradation; L-proline degradation into L-glutamate; L-glutamate from L-proline: step 2/2. The polypeptide is 1-pyrroline-5-carboxylate dehydrogenase (Bacillus cytotoxicus (strain DSM 22905 / CIP 110041 / 391-98 / NVH 391-98)).